The chain runs to 197 residues: Nucleoid occlusion factor SlmA (197 aa).

Residues 7–67 (INRREHILQC…GLIDFIEESL (61 aa)) enclose the HTH tetR-type domain. A DNA-binding region (H-T-H motif) is located at residues 30 to 49 (TTAKLAAEVGVSEAALYRHF).

This sequence belongs to the nucleoid occlusion factor SlmA family. As to quaternary structure, homodimer. Interacts with FtsZ.

It localises to the cytoplasm. Its subcellular location is the nucleoid. Required for nucleoid occlusion (NO) phenomenon, which prevents Z-ring formation and cell division over the nucleoid. Acts as a DNA-associated cell division inhibitor that binds simultaneously chromosomal DNA and FtsZ, and disrupts the assembly of FtsZ polymers. SlmA-DNA-binding sequences (SBS) are dispersed on non-Ter regions of the chromosome, preventing FtsZ polymerization at these regions. In Shewanella sediminis (strain HAW-EB3), this protein is Nucleoid occlusion factor SlmA.